Here is a 2206-residue protein sequence, read N- to C-terminus: Genome polyprotein (2206 aa).

Glycine 2 is lipidated: N-myristoyl glycine; by host. Residues 2–1517 (GAQVSSQKVG…NINRAMTILQ (1516 aa)) lie on the Cytoplasmic side of the membrane. Amphipathic alpha-helix regions lie at residues 579-599 (GIEDLISEVAQGALTLSLPKQ) and 579-603 (GIEDLISEVAQGALTLSLPKQQDSL). Active-site for protease 2A activity residues include histidine 898 and aspartate 916. 2 residues coordinate Zn(2+): cysteine 933 and cysteine 935. Cysteine 987 functions as the For protease 2A activity in the catalytic mechanism. Zn(2+) is bound by residues cysteine 993 and histidine 995. The segment at 1125-1197 (GDSWLKKFTE…HQSCPSQEHQ (73 aa)) is membrane-binding. The oligomerization stretch occupies residues 1125 to 1263 (GDSWLKKFTE…SPGTGKSVAT (139 aa)). The segment at 1146–1150 (SNKIS) is RNA-binding. One can recognise an SF3 helicase domain in the interval 1229–1385 (EHTINNYIQF…GEYSRDGKLN (157 aa)). Position 1253 to 1260 (1253 to 1260 (GSPGTGKS)) interacts with ATP. Residues cysteine 1393, cysteine 1396, cysteine 1405, and cysteine 1410 each contribute to the Zn(2+) site. The C4-type zinc-finger motif lies at 1393–1410 (CKDCHQPANFKRCCPLVC). Residues 1437–1444 (ERNRRSNI) are RNA-binding. The interval 1448 to 1453 (MEALFQ) is oligomerization. An intramembrane segment occupies 1518–1533 (AVTTFAAVAGVVYVMY). At 1534–2206 (KLFAGHQGAY…TLYRRWLDSF (673 aa)) the chain is on the cytoplasmic side. Tyrosine 1543 is modified (O-(5'-phospho-RNA)-tyrosine). A Peptidase C3 domain is found at 1563–1741 (GPGFDYAVAM…FAAALKRSYF (179 aa)). Catalysis depends on for protease 3C activity residues histidine 1602, glutamate 1633, and cysteine 1709. Residues 1972 to 2087 (EKLFAFDYTG…SYPHEVDASL (116 aa)) enclose the RdRp catalytic domain. Mg(2+) contacts are provided by aspartate 1978 and aspartate 2073.

Belongs to the picornaviruses polyprotein family. In terms of assembly, interacts with capsid protein VP1 and capsid protein VP3 to form heterotrimeric protomers. Interacts with capsid protein VP0, and capsid protein VP3 to form heterotrimeric protomers. Interacts with human PVR. Five protomers subsequently associate to form pentamers which serve as building blocks for the capsid. Interacts with capsid protein VP2, capsid protein VP3 and capsid protein VP4 following cleavage of capsid protein VP0. As to quaternary structure, interacts with capsid protein VP1 and capsid protein VP3 in the mature capsid. In terms of assembly, interacts with capsid protein VP0 and capsid protein VP1 to form heterotrimeric protomers. Five protomers subsequently associate to form pentamers which serve as building blocks for the capsid. Interacts with capsid protein VP4 in the mature capsid. Interacts with protein 2C; this interaction may be important for virion morphogenesis. Interacts with capsid protein VP1 and capsid protein VP3. As to quaternary structure, homodimer. In terms of assembly, homohexamer; forms a hexameric ring structure with 6-fold symmetry characteristic of AAA+ ATPases. Interacts (via N-terminus) with host RTN3 (via reticulon domain); this interaction is important for viral replication. Interacts with capsid protein VP3; this interaction may be important for virion morphogenesis. Interacts with protein 3CD. As to quaternary structure, homodimer. Interacts with host GBF1. Interacts (via GOLD domain) with host ACBD3 (via GOLD domain); this interaction allows the formation of a viral protein 3A/ACBD3 heterotetramer with a 2:2 stoichiometry, which will stimulate the recruitment of host PI4KB in order to synthesize PI4P at the viral RNA replication sites. In terms of assembly, interacts with RNA-directed RNA polymerase. Interacts with protein 3AB and with RNA-directed RNA polymerase. As to quaternary structure, interacts with Viral protein genome-linked and with protein 3CD. It depends on Mg(2+) as a cofactor. Post-translationally, specific enzymatic cleavages in vivo by the viral proteases yield processing intermediates and the mature proteins. Myristoylation is required for the formation of pentamers during virus assembly. Further assembly of 12 pentamers and a molecule of genomic RNA generates the provirion. In terms of processing, during virion maturation, immature virions are rendered infectious following cleavage of VP0 into VP4 and VP2. This maturation seems to be an autocatalytic event triggered by the presence of RNA in the capsid and it is followed by a conformational change infectious virion. Post-translationally, myristoylation is required during RNA encapsidation and formation of the mature virus particle. VPg is uridylylated by the polymerase into VPg-pUpU. This acts as a nucleotide-peptide primer for the genomic RNA replication.

The protein localises to the virion. It localises to the host cytoplasm. It is found in the host cytoplasmic vesicle membrane. The protein resides in the host nucleus. The catalysed reaction is a ribonucleoside 5'-triphosphate + H2O = a ribonucleoside 5'-diphosphate + phosphate + H(+). The enzyme catalyses Selective cleavage of Tyr-|-Gly bond in the picornavirus polyprotein.. It carries out the reaction RNA(n) + a ribonucleoside 5'-triphosphate = RNA(n+1) + diphosphate. It catalyses the reaction Selective cleavage of Gln-|-Gly bond in the poliovirus polyprotein. In other picornavirus reactions Glu may be substituted for Gln, and Ser or Thr for Gly.. Its activity is regulated as follows. Replication or transcription is subject to high level of random mutations by the nucleotide analog ribavirin. In terms of biological role, forms an icosahedral capsid of pseudo T=3 symmetry with capsid proteins VP2 and VP3. The capsid is 300 Angstroms in diameter, composed of 60 copies of each capsid protein and enclosing the viral positive strand RNA genome. Capsid protein VP1 mainly forms the vertices of the capsid. Capsid protein VP1 interacts with host cell receptor PVR to provide virion attachment to target host cells. This attachment induces virion internalization predominantly through clathrin- and caveolin-independent endocytosis in Hela cells and through caveolin-mediated endocytosis in brain microvascular endothelial cells. Tyrosine kinases are probably involved in the entry process. Virus binding to PVR induces increased junctional permeability and rearrangement of junctional proteins. Modulation of endothelial tight junctions, as well as cytolytic infection of endothelial cells themselves, may result in loss of endothelial integrity which may help the virus to reach the CNS. After binding to its receptor, the capsid undergoes conformational changes. Capsid protein VP1 N-terminus (that contains an amphipathic alpha-helix) and capsid protein VP4 are externalized. Together, they shape a pore in the host membrane through which viral genome is translocated to host cell cytoplasm. Functionally, forms an icosahedral capsid of pseudo T=3 symmetry with capsid proteins VP2 and VP3. The capsid is 300 Angstroms in diameter, composed of 60 copies of each capsid protein and enclosing the viral positive strand RNA genome. Its function is as follows. Lies on the inner surface of the capsid shell. After binding to the host receptor, the capsid undergoes conformational changes. Capsid protein VP4 is released, Capsid protein VP1 N-terminus is externalized, and together, they shape a pore in the host membrane through which the viral genome is translocated into the host cell cytoplasm. Component of immature procapsids, which is cleaved into capsid proteins VP4 and VP2 after maturation. Allows the capsid to remain inactive before the maturation step. In terms of biological role, cysteine protease that cleaves viral polyprotein and specific host proteins. It is responsible for the autocatalytic cleavage between the P1 and P2 regions, which is the first cleavage occurring in the polyprotein. Also cleaves the host translation initiation factor EIF4G1, in order to shut down the capped cellular mRNA translation. Inhibits the host nucleus-cytoplasm protein and RNA trafficking by cleaving host members of the nuclear pores including NUP98, NUP62 and NUP153. Counteracts stress granule formation probably by antagonizing its assembly or promoting its dissassembly. Cleaves and inhibits host IFIH1/MDA5, thereby inhibiting the type-I IFN production and the establishment of the antiviral state. Cleaves and inhibits host MAVS, thereby inhibiting the type-I IFN production and the establishment of the antiviral state. Functionally, plays an essential role in the virus replication cycle by acting as a viroporin. Creates a pore in the host endoplasmic reticulum and as a consequence releases Ca2+ in the cytoplasm of infected cell. In turn, high levels of cytoplasmic calcium may trigger membrane trafficking and transport of viral ER-associated proteins to viroplasms, sites of viral genome replication. Its function is as follows. Induces and associates with structural rearrangements of intracellular membranes. Displays RNA-binding, nucleotide binding and NTPase activities. May play a role in virion morphogenesis and viral RNA encapsidation by interacting with the capsid protein VP3. Localizes the viral replication complex to the surface of membranous vesicles. Together with protein 3CD binds the Cis-Active RNA Element (CRE) which is involved in RNA synthesis initiation. Acts as a cofactor to stimulate the activity of 3D polymerase, maybe through a nucleid acid chaperone activity. In terms of biological role, localizes the viral replication complex to the surface of membranous vesicles. It inhibits host cell endoplasmic reticulum-to-Golgi apparatus transport and causes the disassembly of the Golgi complex, possibly through GBF1 interaction. This would result in depletion of MHC, trail receptors and IFN receptors at the host cell surface. Plays an essential role in viral RNA replication by recruiting ACBD3 and PI4KB at the viral replication sites, thereby allowing the formation of the rearranged membranous structures where viral replication takes place. Functionally, acts as a primer for viral RNA replication and remains covalently bound to viral genomic RNA. VPg is uridylylated prior to priming replication into VPg-pUpU. The oriI viral genomic sequence may act as a template for this. The VPg-pUpU is then used as primer on the genomic RNA poly(A) by the RNA-dependent RNA polymerase to replicate the viral genome. During genome replication, the VPg-RNA linkage is removed by the host TDP2, thereby accelerating replication. During the late stage of the replication cycle, host TDP2 is excluded from sites of viral RNA synthesis and encapsidation, allowing for the generation of progeny virions. Its function is as follows. Involved in the viral replication complex and viral polypeptide maturation. It exhibits protease activity with a specificity and catalytic efficiency that is different from protease 3C. Protein 3CD lacks polymerase activity. Protein 3CD binds to the 5'UTR of the viral genome. Major viral protease that mediates proteolytic processing of the polyprotein. Cleaves host EIF5B, contributing to host translation shutoff. Also cleaves host PABPC1, contributing to host translation shutoff. Cleaves host RIGI and thus contributes to the inhibition of type I interferon production. Cleaves host NLRP1, triggers host N-glycine-mediated degradation of the autoinhibitory NLRP1 N-terminal fragment. Inhibits the integrated stress response (ISR) in the infected cell by cleaving host G3BP1. Stress granule formation is thus inhibited, which allows protein synthesis and viral replication. In terms of biological role, replicates the viral genomic RNA on the surface of intracellular membranes. May form linear arrays of subunits that propagate along a strong head-to-tail interaction called interface-I. Covalently attaches UMP to a tyrosine of VPg, which is used to prime RNA synthesis. The positive stranded RNA genome is first replicated at virus induced membranous vesicles, creating a dsRNA genomic replication form. This dsRNA is then used as template to synthesize positive stranded RNA genomes. ss(+)RNA genomes are either translated, replicated or encapsidated. In Poliovirus type 3 (strains P3/Leon/37 and P3/Leon 12A[1]B), this protein is Genome polyprotein.